The chain runs to 298 residues: Urease accessory protein UreD 3 (298 aa).

The segment at 1–30 is disordered; it reads MADEAGTRSAGGRPIPAAEPLRPALSRQRS.

The protein belongs to the UreD family. UreD, UreF and UreG form a complex that acts as a GTP-hydrolysis-dependent molecular chaperone, activating the urease apoprotein by helping to assemble the nickel containing metallocenter of UreC. The UreE protein probably delivers the nickel.

It is found in the cytoplasm. Required for maturation of urease via the functional incorporation of the urease nickel metallocenter. This chain is Urease accessory protein UreD 3, found in Methylorubrum extorquens (strain PA1) (Methylobacterium extorquens).